The primary structure comprises 78 residues: MGNVYTKDIKRVAMQLYEKFKDQISTDYQANKKIVDAYVDVMSKKVRNRIAGYLTRYAKMQRTQVKNEVEEEYIEGEG.

Belongs to the eukaryotic ribosomal protein eS17 family.

This chain is Small ribosomal subunit protein eS17, found in Sulfurisphaera tokodaii (strain DSM 16993 / JCM 10545 / NBRC 100140 / 7) (Sulfolobus tokodaii).